Consider the following 339-residue polypeptide: UDP-N-acetylglucosamine--N-acetylmuramyl-(pentapeptide) pyrophosphoryl-undecaprenol N-acetylglucosamine transferase (339 aa).

Residues threonine 11 to glycine 13, asparagine 127, arginine 170, serine 188, isoleucine 235, and glutamine 280 each bind UDP-N-acetyl-alpha-D-glucosamine.

This sequence belongs to the glycosyltransferase 28 family. MurG subfamily.

Its subcellular location is the cell inner membrane. It carries out the reaction di-trans,octa-cis-undecaprenyl diphospho-N-acetyl-alpha-D-muramoyl-L-alanyl-D-glutamyl-meso-2,6-diaminopimeloyl-D-alanyl-D-alanine + UDP-N-acetyl-alpha-D-glucosamine = di-trans,octa-cis-undecaprenyl diphospho-[N-acetyl-alpha-D-glucosaminyl-(1-&gt;4)]-N-acetyl-alpha-D-muramoyl-L-alanyl-D-glutamyl-meso-2,6-diaminopimeloyl-D-alanyl-D-alanine + UDP + H(+). The protein operates within cell wall biogenesis; peptidoglycan biosynthesis. Cell wall formation. Catalyzes the transfer of a GlcNAc subunit on undecaprenyl-pyrophosphoryl-MurNAc-pentapeptide (lipid intermediate I) to form undecaprenyl-pyrophosphoryl-MurNAc-(pentapeptide)GlcNAc (lipid intermediate II). In Thermotoga maritima (strain ATCC 43589 / DSM 3109 / JCM 10099 / NBRC 100826 / MSB8), this protein is UDP-N-acetylglucosamine--N-acetylmuramyl-(pentapeptide) pyrophosphoryl-undecaprenol N-acetylglucosamine transferase.